A 508-amino-acid polypeptide reads, in one-letter code: Carboxypeptidase Y homolog ARB_05721 (508 aa).

A signal peptide spans 1-25 (MELYLNMLSFWYILLATSFFGPSQA). 2 N-linked (GlcNAc...) asparagine glycosylation sites follow: Asn-132 and Asn-169. The active site involves Ser-204. Asn-268 carries N-linked (GlcNAc...) asparagine glycosylation. Cystine bridges form between Cys-282/Cys-305, Cys-289/Cys-298, and Cys-332/Cys-338. Residue Asp-410 is part of the active site. A substrate-binding site is contributed by Cys-413. A glycan (N-linked (GlcNAc...) asparagine) is linked at Asn-451. Residue His-484 is part of the active site. A substrate-binding site is contributed by Met-485.

It belongs to the peptidase S10 family.

It localises to the secreted. It catalyses the reaction Release of a C-terminal amino acid with broad specificity.. Functionally, involved in degradation of small peptides. In Arthroderma benhamiae (strain ATCC MYA-4681 / CBS 112371) (Trichophyton mentagrophytes), this protein is Carboxypeptidase Y homolog ARB_05721.